The following is a 208-amino-acid chain: Small ribosomal subunit protein uS4 (208 aa).

In terms of domain architecture, S4 RNA-binding spans 95 to 161 (MRLDALVLRA…VPLQVAAAGA (67 aa)).

It belongs to the universal ribosomal protein uS4 family. In terms of assembly, part of the 30S ribosomal subunit. Contacts protein S5. The interaction surface between S4 and S5 is involved in control of translational fidelity.

Functionally, one of the primary rRNA binding proteins, it binds directly to 16S rRNA where it nucleates assembly of the body of the 30S subunit. Its function is as follows. With S5 and S12 plays an important role in translational accuracy. The polypeptide is Small ribosomal subunit protein uS4 (Pseudarthrobacter chlorophenolicus (strain ATCC 700700 / DSM 12829 / CIP 107037 / JCM 12360 / KCTC 9906 / NCIMB 13794 / A6) (Arthrobacter chlorophenolicus)).